A 793-amino-acid polypeptide reads, in one-letter code: Plakophilin-3 (793 aa).

The disordered stretch occupies residues 56–82 (QLGQQPRHNGPAEPDGAAEAARGASRA). Positions 66–82 (PAEPDGAAEAARGASRA) are enriched in low complexity. An Omega-N-methylarginine modification is found at Arg81. Phosphoserine occurs at positions 122, 179, and 182. A Phosphotyrosine modification is found at Tyr194. The tract at residues 221–240 (SSSRAGGLDWPEATEGPPSR) is disordered. Position 239 is a phosphoserine (Ser239). Thr249 bears the Phosphothreonine mark. The residue at position 260 (Arg260) is an Omega-N-methylarginine. Phosphoserine occurs at positions 282, 310, 311, and 328. The interval 282–285 (SLSL) is required for interaction with SFN. Residues 291-720 (LPDMRGLDSY…ADVLINIIAV (430 aa)) form a required for interaction with GSK3B region. ARM repeat units follow at residues 302–345 (GHRT…HKCY), 348–387 (AAAKKQARSLQAVPRLVKLFNHANQEVQRHATGAMRNLVY), 390–429 (ADNKLALVEENGIFELLRALREQDDELRKNVTGILWNLSS), 446–484 (TDLVLSPLSGAGGPPLIQQNASEAEIFYNATGFLRNLSS), 488–533 (ATRQ…NLSY), 592–633 (PKGL…NITA), 641–680 (VLSRLALEQERILNPLLDRVRTADHHQLRSLTGLIRNLSR), and 685–726 (KDEM…NLVV). Residues 513 to 793 (VGKCEDKSVE…GYRKEDFLGP (281 aa)) are required for binding to PKP2 mRNA.

The protein belongs to the beta-catenin family. As to quaternary structure, found in a complex composed of CDH1, RAP1A and PKP3; PKP3 acts as a scaffold protein within the complex, the complex is required for CDH1 localization to mature desmosome cell junctions. Interacts with FXR1; the interaction facilitates the binding of PKP3 to PKP2 mRNA. Interacts (via ARM repeats) with GSK3B; the interaction may be involved in PKP3 protein degradation. Interacts with hyperphosphorylated and hypophosphorylated RB1; the interaction inhibits RB1 interaction with and repression of the transcription factor E2F1, potentially via sequestering RB1 to the cytoplasm. Interacts with CDKN1A; the interaction sequesters CDKN1A to the cytoplasm thereby repressing its role as an inhibitor of CDK4- and CDK6-driven RB1 phosphorylation. Interacts (via N-terminus) with SFN; the interaction maintains the cytoplasmic pool of PKP3, facilitates PKP3 exchange at desmosomes and restricts PKP3 localization to existing desmosome cell junctions. Interacts (via N-terminus) with SFN; the interaction maintains the cytoplasmic pool of PKP3 and restricts PKP3 localization to existing desmosome cell junctions. Interacts (via N-terminus) with JUP; the interaction is required for PKP3 localization to desmosome cell-cell junctions. Phosphorylated at Ser-282 when localized to the cytoplasm, PKP3 at desmosome cell junctions is not phosphorylated. Phosphorylation at Try-194 by SRC is induced by reactive oxygen species and potentially acts as a release mechanism from desmosome cell-cell junctions.

Its subcellular location is the nucleus. The protein localises to the cell junction. It is found in the desmosome. The protein resides in the cytoplasm. It localises to the cell membrane. Its subcellular location is the adherens junction. A component of desmosome cell-cell junctions which are required for positive regulation of cellular adhesion. Required for the localization of DSG2, DSP and PKP2 to mature desmosome junctions. May also play a role in the maintenance of DSG3 protein abundance in keratinocytes. Required for the formation of DSP-containing desmosome precursors in the cytoplasm during desmosome assembly. Also regulates the accumulation of CDH1 to mature desmosome junctions, via cAMP-dependent signaling and its interaction with activated RAP1A. Positively regulates the stabilization of PKP2 mRNA and therefore protein abundance, via its interaction with FXR1, may also regulate the protein abundance of DSP via the same mechanism. May also regulate the protein abundance of the desmosome component PKP1. Required for the organization of desmosome junctions at intercellular borders between basal keratinocytes of the epidermis, as a result plays a role in maintenance of the dermal barrier and regulation of the dermal inflammatory response. Required during epidermal keratinocyte differentiation for cell adherence at tricellular cell-cell contacts, via regulation of the timely formation of adherens junctions and desmosomes in a calcium-dependent manner, and may also play a role in the organization of the intracellular actin fiber belt. Acts as a negative regulator of the inflammatory response in hematopoietic cells of the skin and intestine, via modulation of proinflammatory cytokine production. Important for epithelial barrier maintenance in the intestine to reduce intestinal permeability, thereby plays a role in protection from intestinal-derived endotoxemia. Required for the development of hair follicles, via a role in the regulation of inner root sheaf length, correct alignment and anterior-posterior polarity of hair follicles. Promotes proliferation and cell-cycle G1/S phase transition of keratinocytes. Promotes E2F1-driven transcription of G1/S phase promoting genes by acting to release E2F1 from its inhibitory interaction with RB1, via sequestering RB1 and CDKN1A to the cytoplasm and thereby increasing CDK4- and CDK6-driven phosphorylation of RB1. May act as a scaffold protein to facilitate MAPK phosphorylation of RPS6KA protein family members and subsequently promote downstream EGFR signaling. May play a role in the positive regulation of transcription of Wnt-mediated TCF-responsive target genes. This is Plakophilin-3 (PKP3) from Bos taurus (Bovine).